The sequence spans 76 residues: Large ribosomal subunit protein bL31 (76 aa).

Residues cysteine 16, cysteine 18, cysteine 37, and cysteine 40 each contribute to the Zn(2+) site.

It belongs to the bacterial ribosomal protein bL31 family. Type A subfamily. In terms of assembly, part of the 50S ribosomal subunit. It depends on Zn(2+) as a cofactor.

Functionally, binds the 23S rRNA. The protein is Large ribosomal subunit protein bL31 of Solibacter usitatus (strain Ellin6076).